We begin with the raw amino-acid sequence, 113 residues long: Large ribosomal subunit protein bL17 (113 aa).

The protein belongs to the bacterial ribosomal protein bL17 family. As to quaternary structure, part of the 50S ribosomal subunit. Contacts protein L32.

The sequence is that of Large ribosomal subunit protein bL17 from Clostridium beijerinckii (strain ATCC 51743 / NCIMB 8052) (Clostridium acetobutylicum).